Reading from the N-terminus, the 328-residue chain is RING finger protein 175 (328 aa).

Transmembrane regions (helical) follow at residues 51 to 71, 83 to 103, 104 to 121, 149 to 169, and 180 to 200; these read MHVE…IVLV, LVTL…LYWW, RFLS…YILF, AFGV…NLFF, and GIVS…FAEI. The RING-type; atypical zinc finger occupies 227 to 277; the sequence is CAVCGQKIIVELDEEGLIENTYQLSCNHVFHEFCIRGWCIVGKKQTCPYCK.

The protein localises to the membrane. In Homo sapiens (Human), this protein is RING finger protein 175 (RNF175).